Reading from the N-terminus, the 221-residue chain is Ribosomal RNA large subunit methyltransferase E (221 aa).

S-adenosyl-L-methionine contacts are provided by glycine 60, tryptophan 62, aspartate 89, aspartate 105, and aspartate 134. Lysine 174 acts as the Proton acceptor in catalysis. Positions 199–221 (KPKASRDKSSETFLLGRQLKHPG) are disordered.

It belongs to the class I-like SAM-binding methyltransferase superfamily. RNA methyltransferase RlmE family.

The protein localises to the cytoplasm. The catalysed reaction is uridine(2552) in 23S rRNA + S-adenosyl-L-methionine = 2'-O-methyluridine(2552) in 23S rRNA + S-adenosyl-L-homocysteine + H(+). Its function is as follows. Specifically methylates the uridine in position 2552 of 23S rRNA at the 2'-O position of the ribose in the fully assembled 50S ribosomal subunit. This chain is Ribosomal RNA large subunit methyltransferase E, found in Ralstonia pickettii (strain 12J).